We begin with the raw amino-acid sequence, 787 residues long: Serine proteinase stubble (787 aa).

The disordered stretch occupies residues 1–22 (MKQPTLIRPRLRHRRSTPAAAT). At 1–58 (MKQPTLIRPRLRHRRSTPAAATKMCPKRHWLVNNRAAGSRGSGGAAARSRRSLDQIVE) the chain is on the cytoplasmic side. The chain crosses the membrane as a helical; Signal-anchor for type II membrane protein span at residues 59 to 80 (VLVALIVVNCLATAAAALITPP). Topologically, residues 81-787 (DSLESLGSLG…FTPWILEHVR (707 aa)) are extracellular. The N-linked (GlcNAc...) asparagine glycan is linked to Asn177. The interval 225–516 (AGTLVIRPSG…EISDSSIPDA (292 aa)) is disordered. Composition is skewed to low complexity over residues 262 to 280 (SASHPSSSSSSSSSSNPNS), 287 to 303 (QQQQQQQHQQNQQNHWQ), 358 to 368 (PSTSTSTTSTS), 393 to 438 (SLAA…RTTT), and 449 to 485 (TTATSSSSTSTTSSKTPTTTRPISSSSSSSSGIVTSS). Over residues 502 to 512 (GIETNEISDSS) the composition is skewed to polar residues. 2 cysteine pairs are disulfide-bonded: Cys532/Cys660 and Cys575/Cys591. The Peptidase S1 domain occupies 544–787 (IVGGKSAAFG…FTPWILEHVR (244 aa)). Catalysis depends on charge relay system residues His590 and Asp640. N-linked (GlcNAc...) asparagine glycosylation occurs at Asn672. Intrachain disulfides connect Cys704–Cys723 and Cys734–Cys763. Ser738 serves as the catalytic Charge relay system.

This sequence belongs to the peptidase S1 family. May activate itself by proteolytic cleavage.

Its subcellular location is the membrane. In terms of biological role, hormone dependent protease required for epithelial morphogenesis, including the formation of bristles, legs, and wings. Has a dual function, detaches imaginal disk cells from extracellular matrices through its extracellular proteolytic domain and transmits an outside-to-inside signal to its intracellular domain to modify the cytoskeleton during morphogenesis. This is Serine proteinase stubble (Sb) from Drosophila melanogaster (Fruit fly).